Consider the following 222-residue polypeptide: Superoxide dismutase [Mn], mitochondrial (222 aa).

The transit peptide at 1 to 24 (MLCRAACSTGRRLGPVAGAAGSRH) directs the protein to the mitochondrion. A Mn(2+)-binding site is contributed by His-50. Tyr-58 bears the 3'-nitrotyrosine mark. N6-acetyllysine; alternate is present on residues Lys-68 and Lys-75. Residues Lys-68 and Lys-75 each carry the N6-succinyllysine; alternate modification. His-98 provides a ligand contact to Mn(2+). Position 114 is an N6-acetyllysine (Lys-114). N6-acetyllysine; alternate is present on residues Lys-122 and Lys-130. N6-succinyllysine; alternate occurs at positions 122 and 130. The Mn(2+) site is built by Asp-183 and His-187. N6-acetyllysine is present on Lys-202.

This sequence belongs to the iron/manganese superoxide dismutase family. Homotetramer. Mn(2+) serves as cofactor. In terms of processing, nitrated under oxidative stress. Nitration coupled with oxidation inhibits the catalytic activity. Post-translationally, acetylation at Lys-122 decreases enzymatic activity. Deacetylated by SIRT3 upon exposure to ionizing radiations or after long fasting. Polyubiquitinated; leading to proteasomal degradation. Deubiquitinated by USP36 which increases protein stability.

It is found in the mitochondrion matrix. The enzyme catalyses 2 superoxide + 2 H(+) = H2O2 + O2. Destroys superoxide anion radicals which are normally produced within the cells and which are toxic to biological systems. This chain is Superoxide dismutase [Mn], mitochondrial (Sod2), found in Mus musculus (Mouse).